The chain runs to 732 residues: Asp/Glu-specific dipeptidyl-peptidase (732 aa).

Residues 1-18 (MRIALVATLVLTSGIANA) form the signal peptide. Residues H80, D215, and S666 each act as charge relay system in the active site.

The protein belongs to the peptidase S46 family.

In terms of biological role, catalyzes the removal of dipeptides from the N-terminus of oligopeptides. Shows a strict specificity for acidic residues (Asp or Glu) in the P1 position, and has probably a hydrophobic residue preference at the P2 position. Preferentially cleaves the synthetic substrate Leu-Glu-methylcoumaryl-7-amide (Leu-Glu-MCA) as compared to Leu-Asp-MCA. The protein is Asp/Glu-specific dipeptidyl-peptidase (dpp11) of Shewanella putrefaciens (strain CN-32 / ATCC BAA-453).